The primary structure comprises 467 residues: Transcription factor TGAL7 (467 aa).

Residues 1 to 10 (MGGSREEDRQ) are compositionally biased toward basic and acidic residues. 2 disordered regions span residues 1 to 42 (MGGS…KESS) and 105 to 184 (QLQV…KTLR). The segment covering 25-41 (SSSPTTMIASSSMSKES) has biased composition (low complexity). The segment covering 120-129 (QGGQKINSSV) has biased composition (polar residues). A compositionally biased stretch (basic and acidic residues) spans 145-157 (KDNKNSSLIKKEG). Polar residues predominate over residues 158 to 168 (SSSGKGATTSN). A compositionally biased stretch (basic and acidic residues) spans 169 to 182 (DPEREGRRTLDPKT). The region spanning 179-223 (DPKTLRRLAQNREAARKSRLRKKAYIQQLESSRIRLSQLEQQVHV) is the bZIP domain. Residues 181–201 (KTLRRLAQNREAARKSRLRKK) are basic motif. The interval 207–221 (LESSRIRLSQLEQQV) is leucine-zipper. The DOG1 domain maps to 247 to 458 (ASLFDLEYGR…RALSTLWVAR (212 aa)).

Belongs to the bZIP family. As to quaternary structure, interacts with NPR5/NH4, NH5.1 and NH5.2.

It is found in the nucleus. Transcriptional regulator involved in defense response. The sequence is that of Transcription factor TGAL7 from Oryza sativa subsp. japonica (Rice).